We begin with the raw amino-acid sequence, 449 residues long: Histidinol dehydrogenase (449 aa).

Residues Tyr135, Gln199, and Asn229 each contribute to the NAD(+) site. Thr252, Gln274, and His277 together coordinate substrate. Zn(2+)-binding residues include Gln274 and His277. Catalysis depends on proton acceptor residues Glu343 and His344. His344, Asp377, Glu431, and His436 together coordinate substrate. Asp377 contributes to the Zn(2+) binding site. His436 contributes to the Zn(2+) binding site.

This sequence belongs to the histidinol dehydrogenase family. Requires Zn(2+) as cofactor.

It carries out the reaction L-histidinol + 2 NAD(+) + H2O = L-histidine + 2 NADH + 3 H(+). It functions in the pathway amino-acid biosynthesis; L-histidine biosynthesis; L-histidine from 5-phospho-alpha-D-ribose 1-diphosphate: step 9/9. Its function is as follows. Catalyzes the sequential NAD-dependent oxidations of L-histidinol to L-histidinaldehyde and then to L-histidine. In Corynebacterium diphtheriae (strain ATCC 700971 / NCTC 13129 / Biotype gravis), this protein is Histidinol dehydrogenase.